Consider the following 2639-residue polypeptide: BAH and coiled-coil domain-containing protein 1 (2639 aa).

Disordered stretches follow at residues serine 23–phenylalanine 49, serine 84–proline 107, alanine 188–arginine 249, phenylalanine 669–proline 702, valine 716–threonine 746, glutamine 939–alanine 1047, serine 1104–glycine 1331, glutamine 1457–lysine 1513, lysine 1582–glutamate 1666, glutamate 1722–leucine 1776, phenylalanine 1868–alanine 1893, and lysine 2057–leucine 2119. 2 stretches are compositionally biased toward low complexity: residues alanine 24–alanine 41 and serine 84–proline 98. Basic and acidic residues-rich tracts occupy residues glycine 211–lysine 247 and glutamate 679–valine 698. Lysine 222 is subject to N6-acetyllysine. Residues arginine 946–proline 964 show a composition bias toward basic and acidic residues. Positions alanine 972 to threonine 988 are enriched in low complexity. Over residues lysine 989–serine 1013 the composition is skewed to pro residues. The span at valine 1106 to proline 1122 shows a compositional bias: polar residues. Low complexity predominate over residues leucine 1182–glycine 1198. The span at alanine 1212–glycine 1221 shows a compositional bias: basic and acidic residues. Acidic residues predominate over residues leucine 1244–cysteine 1275. A compositionally biased stretch (pro residues) spans aspartate 1307–valine 1324. Residues glutamate 1439–glutamate 1473 are a coiled coil. The span at glutamine 1457 to serine 1475 shows a compositional bias: basic and acidic residues. Positions proline 1478 to serine 1492 are enriched in basic residues. Basic residues predominate over residues glycine 1751–glycine 1761. Acidic residues predominate over residues phenylalanine 1868–serine 1888. Serine 2274 is modified (phosphoserine). Disordered regions lie at residues serine 2317–glycine 2336, serine 2348–glutamate 2383, and glycine 2432–proline 2472. Residues serine 2348–serine 2371 are compositionally biased toward low complexity. Acidic residues predominate over residues aspartate 2372–glutamate 2383. Residues glycine 2432–lysine 2442 are compositionally biased toward low complexity. A BAH domain is found at glutamate 2513–aspartate 2633.

The protein is BAH and coiled-coil domain-containing protein 1 of Homo sapiens (Human).